Here is a 116-residue protein sequence, read N- to C-terminus: DNA polymerase epsilon subunit 4 (116 aa).

Residues 1 to 10 (MAAAAPGSGA) show a composition bias toward low complexity. The segment at 1–36 (MAAAAPGSGAAREEEGTGGDAATPQPPAPTSAPGAR) is disordered.

As to quaternary structure, component of the DNA polymerase epsilon complex consisting of four subunits: the catalytic subunit POLE and the accessory subunits POLE2, POLE3 and POLE4. Interaction with POLE3 is a prerequisite for further binding with POLE and POLE2.

It localises to the nucleus. Functionally, accessory component of the DNA polymerase epsilon complex. Participates in DNA repair and in chromosomal DNA replication. The protein is DNA polymerase epsilon subunit 4 (POLE4) of Bos taurus (Bovine).